The sequence spans 209 residues: Large ribosomal subunit protein uL3 (209 aa).

Residues 127–151 are disordered; the sequence is SGGPSSHGSKFHRHLGGTGQATTPA.

It belongs to the universal ribosomal protein uL3 family. As to quaternary structure, part of the 50S ribosomal subunit. Forms a cluster with proteins L14 and L19.

In terms of biological role, one of the primary rRNA binding proteins, it binds directly near the 3'-end of the 23S rRNA, where it nucleates assembly of the 50S subunit. The chain is Large ribosomal subunit protein uL3 from Borrelia turicatae (strain 91E135).